A 100-amino-acid chain; its full sequence is Large ribosomal subunit protein uL23 (100 aa).

Belongs to the universal ribosomal protein uL23 family. As to quaternary structure, part of the 50S ribosomal subunit. Contacts protein L29, and trigger factor when it is bound to the ribosome.

In terms of biological role, one of the early assembly proteins it binds 23S rRNA. One of the proteins that surrounds the polypeptide exit tunnel on the outside of the ribosome. Forms the main docking site for trigger factor binding to the ribosome. The polypeptide is Large ribosomal subunit protein uL23 (Synechococcus sp. (strain RCC307)).